We begin with the raw amino-acid sequence, 265 residues long: Sulfur carrier protein FdhD (265 aa).

The active-site Cysteine persulfide intermediate is the Cys-107.

The protein belongs to the FdhD family.

It is found in the cytoplasm. Functionally, required for formate dehydrogenase (FDH) activity. Acts as a sulfur carrier protein that transfers sulfur from IscS to the molybdenum cofactor prior to its insertion into FDH. This Staphylococcus aureus (strain NCTC 8325 / PS 47) protein is Sulfur carrier protein FdhD.